Here is a 488-residue protein sequence, read N- to C-terminus: Fumarate hydratase (488 aa).

(S)-malate contacts are provided by Ser-105, Ser-147, Asn-148, Thr-194, and His-195. The Proton donor/acceptor role is filled by His-195. The active site involves Ser-340. (S)-malate is bound by residues Ser-341, Lys-346, and Asn-348.

The protein belongs to the class-II fumarase/aspartase family. Fumarase subfamily. Homotetramer.

It is found in the cytoplasm. Its subcellular location is the cytosol. It carries out the reaction (S)-malate = fumarate + H2O. Functionally, catalyzes the reversible stereospecific interconversion of fumarate to L-malate. Fumarate metabolism in the cytosol plays a role during urea cycle and arginine metabolism; fumarate being a by-product of the urea cycle and amino-acid catabolism. This Schistosoma mansoni (Blood fluke) protein is Fumarate hydratase.